The following is a 171-amino-acid chain: Dual specificity protein phosphatase OPG106 (171 aa).

The Tyrosine-protein phosphatase domain occupies 23-171 (SPTIMTRVTN…IIEKYVIDKN (149 aa)). C110 acts as the Phosphocysteine intermediate in catalysis.

The protein belongs to the protein-tyrosine phosphatase family. Non-receptor class dual specificity subfamily. In terms of assembly, homodimer.

The protein localises to the virion. It is found in the host cytoplasm. The enzyme catalyses O-phospho-L-tyrosyl-[protein] + H2O = L-tyrosyl-[protein] + phosphate. It carries out the reaction O-phospho-L-seryl-[protein] + H2O = L-seryl-[protein] + phosphate. Its activity is regulated as follows. Inhibited by NSC-62914, NSC-28086, NSC-105687, NSC-23173, 540211 and 217691 with IC50 values of 48, 51, 212, 342, 4 and 11 uM, respectively. Serine/tyrosine phosphatase which down-regulates cellular antiviral response by dephosphorylating activated host STAT1 and blocking interferon (IFN)-stimulated innate immune responses. Dephosphorylates the OPG144 protein. This Homo sapiens (Human) protein is Dual specificity protein phosphatase OPG106 (OPG106).